Reading from the N-terminus, the 404-residue chain is Ubiquitin-like modifier-activating enzyme 5 (404 aa).

ATP-binding residues include G83, D104, K127, N150, and N184. Residues C226 and C229 each contribute to the Zn(2+) site. Residue C250 is the Glycyl thioester intermediate of the active site. Residues C303 and C308 each coordinate Zn(2+). The interval 372–393 (APEKSSETSEETVTAATADETS) is disordered. Over residues 382 to 391 (ETVTAATADE) the composition is skewed to low complexity.

The protein belongs to the ubiquitin-activating E1 family. UBA5 subfamily.

In terms of biological role, E1-like enzyme which activates UFM1. This Drosophila sechellia (Fruit fly) protein is Ubiquitin-like modifier-activating enzyme 5.